The primary structure comprises 330 residues: Malate dehydrogenase (330 aa).

An NAD(+)-binding site is contributed by 11-17 (GGAGQIA). The substrate site is built by Arg92 and Arg98. Residues Asn105, Gln112, and 129 to 131 (VGN) each bind NAD(+). Substrate contacts are provided by Asn131 and Arg162. His187 serves as the catalytic Proton acceptor.

The protein belongs to the LDH/MDH superfamily. MDH type 2 family.

The enzyme catalyses (S)-malate + NAD(+) = oxaloacetate + NADH + H(+). Catalyzes the reversible oxidation of malate to oxaloacetate. The protein is Malate dehydrogenase of Protochlamydia amoebophila (strain UWE25).